Reading from the N-terminus, the 375-residue chain is tRNA-specific 2-thiouridylase MnmA (375 aa).

ATP-binding positions include 12–19 (GMSGGVDS) and methionine 38. Residues 98-100 (NPD) form an interaction with target base in tRNA region. Cysteine 103 functions as the Nucleophile in the catalytic mechanism. Cysteine 103 and cysteine 200 are oxidised to a cystine. Position 127 (glycine 127) interacts with ATP. Residues 150–152 (KDQ) form an interaction with tRNA region. Cysteine 200 acts as the Cysteine persulfide intermediate in catalysis. Residues 312–313 (RY) are interaction with tRNA.

It belongs to the MnmA/TRMU family.

It localises to the cytoplasm. It catalyses the reaction S-sulfanyl-L-cysteinyl-[protein] + uridine(34) in tRNA + AH2 + ATP = 2-thiouridine(34) in tRNA + L-cysteinyl-[protein] + A + AMP + diphosphate + H(+). Functionally, catalyzes the 2-thiolation of uridine at the wobble position (U34) of tRNA, leading to the formation of s(2)U34. This Ligilactobacillus salivarius (strain UCC118) (Lactobacillus salivarius) protein is tRNA-specific 2-thiouridylase MnmA.